The following is a 620-amino-acid chain: Transcription factor kayak (620 aa).

2 disordered regions span residues 1 to 36 (MKVK…SNGV) and 184 to 288 (SDTD…EKRR). The span at 184-194 (SDTDDSNASWN) shows a compositional bias: polar residues. Low complexity-rich tracts occupy residues 201–233 (GDTT…GANN) and 249–266 (ANNN…PAAR). The bZIP domain maps to 284–347 (EEKRRIRRER…NQLKYVIEAH (64 aa)). The segment at 286-305 (KRRIRRERNKAAAARCRKRR) is basic motif. The leucine-zipper stretch occupies residues 312–340 (LTEEVDALVKKGDTLKAEITTLTELRNQL). Residues 375-414 (STGGSSCGSVHSNHSHNNNNNNNNSNDSSSGTITGFDATL) are disordered. The span at 377-405 (GGSSCGSVHSNHSHNNNNNNNNSNDSSSG) shows a compositional bias: low complexity. Ser-422 bears the Phosphoserine mark. 2 disordered regions span residues 447–466 (GLDS…AKRA) and 590–620 (SGPL…LCPL).

It belongs to the bZIP family. Fos subfamily. Homodimer. Heterodimer with Jra. The kay-Jra heterodimer binds more stably to the AP-1 site than either of the two proteins alone.

The protein resides in the nucleus. Developmentally regulated transcription factor AP-1 binds and recognizes the enhancer DNA sequence: 5'-TGA[CG]TCA-3'. May play a role in the function or determination of a particular subset of cells in the developing embryo. It is able to carry out its function either independently of or in conjunction with Jra. This Drosophila willistoni (Fruit fly) protein is Transcription factor kayak.